The chain runs to 439 residues: Tol-Pal system protein TolB (439 aa).

Residues 1–22 form the signal peptide; that stretch reads MKKPLRWLAALTVLLLPLSALA.

It belongs to the TolB family. In terms of assembly, the Tol-Pal system is composed of five core proteins: the inner membrane proteins TolA, TolQ and TolR, the periplasmic protein TolB and the outer membrane protein Pal. They form a network linking the inner and outer membranes and the peptidoglycan layer.

Its subcellular location is the periplasm. Its function is as follows. Part of the Tol-Pal system, which plays a role in outer membrane invagination during cell division and is important for maintaining outer membrane integrity. The polypeptide is Tol-Pal system protein TolB (Xanthomonas oryzae pv. oryzae (strain MAFF 311018)).